A 711-amino-acid chain; its full sequence is K(+)-insensitive pyrophosphate-energized proton pump (711 aa).

The next 5 membrane-spanning stretches (helical) occupy residues 7-27 (LIYGVIVIAALVIIGLIKFIF), 58-78 (IASLALIVAVIIVVANYYGHL), 85-105 (ALSFALHVGFAFITGAFCSAL), 145-165 (LAVTALSLFGVATLFLAYGGL), and 179-199 (IVGFGFGASFVALFAQLGGGI). Residue Lys-202 coordinates substrate. Residues Asp-205, Asp-209, and Asp-235 each coordinate Mg(2+). The next 6 helical transmembrane spans lie at 251 to 271 (TAAENIGAMILGVGLYPIFGW), 274 to 294 (ILFPLVARAIGIIASIIGIFF), 311 to 331 (GYFVTTVVNLIALFFAVKVML), 343 to 363 (YLLLYGAVVTGVILSYIFVFL), 403 to 423 (LPVIFISAAIYIAYKLGEMAI), and 431 to 451 (LYGTAIATMGMLSTTAYILAM). Asp-459 contacts Mg(2+). The next 4 membrane-spanning stretches (helical) occupy residues 495-515 (YAIGSAALATFLLFSAYLDEV), 535-555 (EVFIGAFIGAMIVYLFSSTAI), 602-622 (EMVIPGLIVVVTPILVGVILG), and 624-644 (EAAAAFLMIGTISGVILALYL). Ca(2+) contacts are provided by Asp-652, Asp-678, and Asp-682. Position 685 (Lys-685) interacts with substrate. The helical transmembrane segment at 690–710 (PSLHVLIKLISTITLVFVALF) threads the bilayer.

Belongs to the H(+)-translocating pyrophosphatase (TC 3.A.10) family. K(+)-insensitive subfamily. Homodimer. Requires Mg(2+) as cofactor.

The protein localises to the cell membrane. It catalyses the reaction diphosphate + H2O + H(+)(in) = 2 phosphate + 2 H(+)(out). In terms of biological role, proton pump that utilizes the energy of pyrophosphate hydrolysis as the driving force for proton movement across the membrane. Generates a proton motive force. This chain is K(+)-insensitive pyrophosphate-energized proton pump, found in Caldanaerobacter subterraneus subsp. tengcongensis (strain DSM 15242 / JCM 11007 / NBRC 100824 / MB4) (Thermoanaerobacter tengcongensis).